The following is a 169-amino-acid chain: Der GTPase-activating protein YihI (169 aa).

2 disordered regions span residues 1–100 (MKPS…AELE) and 144–169 (GLSY…LRGN). A compositionally biased stretch (basic residues) spans 10–19 (SKGHAKARRK). Basic and acidic residues predominate over residues 20–30 (TREELDQEARD). A compositionally biased stretch (basic residues) spans 31 to 40 (RKRQKKRRGH). Residues 49-58 (GNTSSGSKGQ) show a composition bias toward polar residues. The segment covering 147-159 (YDDDEEEEEDEKQ) has biased composition (acidic residues). Residues 160-169 (EDMMRLLRGN) are compositionally biased toward basic and acidic residues.

The protein belongs to the YihI family. As to quaternary structure, interacts with Der.

Its function is as follows. A GTPase-activating protein (GAP) that modifies Der/EngA GTPase function. May play a role in ribosome biogenesis. This chain is Der GTPase-activating protein YihI, found in Escherichia coli (strain SMS-3-5 / SECEC).